The primary structure comprises 809 residues: MSKSSKVGMTDVSVPKSAVLKKRNQREVEAEVDESSEEEFEMDGLLDAEASEDDEEDEENSEDDEEEDSDKELNELLGEEEDPSDYDSENFSDEPQESDTRSITDAISGVKIRSLSDISSQDKQEFHTKYSDGSERIIKPEIEPVYDSDDSDAENFNTIGDIPLSAYDEMPHLGYDINGKRIMRPAKGSALDQLLESIDLPQGWTGLLDQNTGSSLNLTDEELELIRKIQQQENTDANIDPYEATIEWFTSKVEVMPLTAVPEPKRRFVPSKHEAKRVMKIVRAIREGRIIPPSKVKEQIEEERLNYDLWNDDDIAVEDHIMNLRAPKLPPPTNEESYNPPEEYLLTEEEKKQWESLDPADRERNFLPQKFGALRKVPGYQESVRERFERCLDLYLAPRVRHNKLNIDPESLIPELPSPKDLRPFPIRCSTVYQGHTDKIRTISIDPQGLWLATGSDDGSVRIWEILTGRQVFNVQLINKEINDEDHIESLEWNPDSQTGILAVCAGENIYLVVPPIFGFDIENMGRLRIESGWGYDTFGNKTKEEKFKNDEGNEDEDDEDDSATSTAVKKDVARWFPPNQEQTKLGISAIIQCRKTVKKVSWHRKGDYFVTVSPDSKNTAVLIHQLSKHLSQSPFKKSKGIIMDAKFHPFKPQLFVASQRQVRIYDLAQQVLVKKLMPGVRLLSTIDIHPRGDNLLASSYDKRVLWHDLDLSATPYKTLRYHEKAVRSIKFHKGNLPLFASASDDGNIHIFHGTVYDDLMTNPLLVPLKKLTGHKIVNSIGILDLIWHPKEAWLFSAGADGTARLWTT.

The interval 1–107 (MSKSSKVGMT…SDTRSITDAI (107 aa)) is disordered. 2 stretches are compositionally biased toward acidic residues: residues 30–70 (AEVD…EDSD) and 77–97 (LGEE…EPQE). The required for interaction with NOP7 stretch occupies residues 267-383 (RFVPSKHEAK…LRKVPGYQES (117 aa)). Residues 383–419 (SVRERFERCLDLYLAPRVRHNKLNIDPESLIPELPSP) form a required for interaction with YTM1 region. WD repeat units lie at residues 435–474 (GHTD…QVFN) and 483–523 (NDED…FDIE). The interval 545–569 (EEKFKNDEGNEDEDDEDDSATSTAV) is disordered. Over residues 553-563 (GNEDEDDEDDS) the composition is skewed to acidic residues. WD repeat units lie at residues 593–635 (QCRK…SQSP), 638–676 (KSKG…LVKK), 679–718 (PGVR…TPYK), 722–762 (YHEK…DLMT), and 778–809 (VNSI…LWTT).

It belongs to the WD repeat BOP1/ERB1 family. In terms of assembly, component of the NOP7 complex, composed of ERB1, NOP7 and YTM1. The complex is held together by ERB1, which interacts with NOP7 via its N-terminal domain and with YTM1 via a high-affinity interaction between the seven-bladed beta-propeller domains of the 2 proteins. The NOP7 complex associates with the 66S pre-ribosome.

It localises to the nucleus. Its subcellular location is the nucleolus. The protein localises to the nucleoplasm. Functionally, component of the NOP7 complex, which is required for maturation of the 25S and 5.8S ribosomal RNAs and formation of the 60S ribosome. The sequence is that of Ribosome biogenesis protein ERB1 from Scheffersomyces stipitis (strain ATCC 58785 / CBS 6054 / NBRC 10063 / NRRL Y-11545) (Yeast).